We begin with the raw amino-acid sequence, 397 residues long: uncharacterized protein (397 aa).

Residues S115 and S141 each carry the phosphoserine modification. Positions 135 to 156 are disordered; it reads NSLNHDSPPHTPARRSDNSTSK. K239 is covalently cross-linked (Glycyl lysine isopeptide (Lys-Gly) (interchain with G-Cter in SUMO2)). Residues S269 and S296 each carry the phosphoserine modification. The disordered stretch occupies residues 289-316; the sequence is GRGPTKASPQPALTVKAKATSSATTLAS. The segment covering 300–316 has biased composition (low complexity); it reads ALTVKAKATSSATTLAS. At S342 the chain carries Phosphoserine. Residues 354–397 form a disordered region; the sequence is SEAQDSQVTSTKSPTVRCIVPDPPAPLASQRPPRRRWRRTCKDC. A compositionally biased stretch (polar residues) spans 356–367; it reads AQDSQVTSTKSP. Residues 385 to 397 show a composition bias toward basic residues; the sequence is PPRRRWRRTCKDC.

This is an uncharacterized protein from Rattus norvegicus (Rat).